The primary structure comprises 475 residues: AAA-ATPase At1g43910 (475 aa).

A helical membrane pass occupies residues 11–28 (VSAVFSLYTSFSAITMLF). T85 is subject to Phosphothreonine. 246 to 253 (GPPGTGKS) provides a ligand contact to ATP. Disordered stretches follow at residues 306 to 328 (SRRR…PQKR) and 453 to 475 (KGED…EAET). Positions 457–467 (SSVEEEGEIED) are enriched in acidic residues.

Belongs to the AAA ATPase family. BCS1 subfamily. Mg(2+) serves as cofactor. Expressed in developing shoots.

The protein resides in the membrane. It carries out the reaction ATP + H2O = ADP + phosphate + H(+). The sequence is that of AAA-ATPase At1g43910 from Arabidopsis thaliana (Mouse-ear cress).